Reading from the N-terminus, the 73-residue chain is Protein kish (73 aa).

An N-terminal signal peptide occupies residues 1–21; the sequence is MTAIFNFESLLFVILLTICTC. The Lumenal portion of the chain corresponds to 22 to 52; sequence TYLHRQFPALLEKRKEGVTMVFWKCARIGER. A helical transmembrane segment spans residues 53-73; that stretch reads ASPYISLFCVFMALRFIFGSS.

It belongs to the KISH family.

It localises to the golgi apparatus membrane. Its subcellular location is the endoplasmic reticulum membrane. Functionally, involved in the early part of the secretory pathway. This is Protein kish (ksh1) from Schizosaccharomyces pombe (strain 972 / ATCC 24843) (Fission yeast).